The sequence spans 793 residues: Tripartite terminase subunit 1 (793 aa).

A C3H1-type zinc finger spans residues 206-234; sequence CSVCFEELCVTANSGDSTHKRIVRKICDH. 697-704 contacts ATP; the sequence is FSSVFKCG.

The protein belongs to the herpesviridae TRM1 protein family. In terms of assembly, associates with TRM2 and TRM3 to form the tripartite terminase complex. Interacts with portal protein.

The protein localises to the host nucleus. In terms of biological role, component of the molecular motor that translocates viral genomic DNA in empty capsid during DNA packaging. Forms a tripartite terminase complex together with TRM2 and TRM3 in the host cytoplasm. Once the complex reaches the host nucleus, it interacts with the capsid portal vertex. This portal forms a ring in which genomic DNA is translocated into the capsid. TRM1 carries an endonuclease activity that plays an important role for the cleavage of concatemeric viral DNA into unit length genomes. The chain is Tripartite terminase subunit 1 from Gallid herpesvirus 2 (strain Chicken/Md5/ATCC VR-987) (GaHV-2).